Consider the following 175-residue polypeptide: MATALVLGYSAFDLGLFSDKDPRLKLIKKAIRKDLEAMAADGVSWLVFTGSLGFEYWVLEVAQEMKTEYGFQLATIFAFETHGENWNEGNQMKLSRFKQVDFVKYAYPRYEHKGQLRDYQQFLLENTTSSYLFYDEENETKLAYFYQKMKNQEDYFIKRLTFDELNELAENFSEN.

The protein belongs to the UPF0398 family.

The sequence is that of UPF0398 protein SPP_0409 from Streptococcus pneumoniae (strain P1031).